Reading from the N-terminus, the 283-residue chain is Bifunctional protein FolD (283 aa).

Residues 166–168 (GAS) and Ile232 each bind NADP(+).

It belongs to the tetrahydrofolate dehydrogenase/cyclohydrolase family. Homodimer.

It catalyses the reaction (6R)-5,10-methylene-5,6,7,8-tetrahydrofolate + NADP(+) = (6R)-5,10-methenyltetrahydrofolate + NADPH. It carries out the reaction (6R)-5,10-methenyltetrahydrofolate + H2O = (6R)-10-formyltetrahydrofolate + H(+). It participates in one-carbon metabolism; tetrahydrofolate interconversion. Catalyzes the oxidation of 5,10-methylenetetrahydrofolate to 5,10-methenyltetrahydrofolate and then the hydrolysis of 5,10-methenyltetrahydrofolate to 10-formyltetrahydrofolate. The polypeptide is Bifunctional protein FolD (Hamiltonella defensa subsp. Acyrthosiphon pisum (strain 5AT)).